Here is a 267-residue protein sequence, read N- to C-terminus: Regulatory protein VirG (267 aa).

The 115-residue stretch at 29 to 143 folds into the Response regulatory domain; the sequence is HVLLVDDDVA…EFLARIRVAL (115 aa). D78 carries the post-translational modification 4-aspartylphosphate. Positions 155–255 form a DNA-binding region, ompR/PhoB-type; the sequence is RRSFCFTDWT…ARGAGYFFDA (101 aa).

Phosphorylated by wide host range (WHR) VirA protein.

Its subcellular location is the cytoplasm. VirG is required for the positive regulation of at least two vir loci encoded by the Ti plasmid of A.tumefaciens. The polypeptide is Regulatory protein VirG (virG) (Agrobacterium tumefaciens (strain 15955)).